The following is a 271-amino-acid chain: Exosome complex component Rrp42 (271 aa).

It belongs to the RNase PH family. Rrp42 subfamily. In terms of assembly, component of the archaeal exosome complex. Forms a hexameric ring-like arrangement composed of 3 Rrp41-Rrp42 heterodimers. The hexameric ring associates with a trimer of Rrp4 and/or Csl4 subunits.

The protein resides in the cytoplasm. Non-catalytic component of the exosome, which is a complex involved in RNA degradation. Contributes to the structuring of the Rrp41 active site. The sequence is that of Exosome complex component Rrp42 from Methanothermobacter thermautotrophicus (strain ATCC 29096 / DSM 1053 / JCM 10044 / NBRC 100330 / Delta H) (Methanobacterium thermoautotrophicum).